Here is a 299-residue protein sequence, read N- to C-terminus: Mitochondrial 2-oxodicarboxylate carrier (299 aa).

Solcar repeat units follow at residues 11-100 (REAS…YKKL), 107-196 (SPAL…VKNM), and 205-294 (LEFL…TYSW). 6 helical membrane-spanning segments follow: residues 17–37 (IVAG…LDVV), 70–89 (FGFY…KRAV), 113–133 (TIAG…FEVV), 167–187 (GLNK…MVYF), 205–225 (LEFL…SVIN), and 277–297 (LGPG…WLQE).

It belongs to the mitochondrial carrier (TC 2.A.29) family.

Its subcellular location is the mitochondrion inner membrane. It catalyses the reaction 2-oxoadipate(in) + 2-oxoglutarate(out) = 2-oxoadipate(out) + 2-oxoglutarate(in). The enzyme catalyses hexanedioate(in) + 2-oxoglutarate(out) = hexanedioate(out) + 2-oxoglutarate(in). It carries out the reaction L-2-aminoadipate(in) + 2-oxoglutarate(out) = L-2-aminoadipate(out) + 2-oxoglutarate(in). The catalysed reaction is glutarate(in) + 2-oxoglutarate(out) = glutarate(out) + 2-oxoglutarate(in). It catalyses the reaction 2-oxoheptanedioate(in) + 2-oxoglutarate(out) = 2-oxoheptanedioate(out) + 2-oxoglutarate(in). The enzyme catalyses heptanedioate(in) + 2-oxoglutarate(out) = heptanedioate(out) + 2-oxoglutarate(in). It carries out the reaction citrate(in) + 2-oxoglutarate(out) = citrate(out) + 2-oxoglutarate(in). In terms of biological role, transports dicarboxylates across the inner membranes of mitochondria by a counter-exchange mechanism. Can transport 2-oxoadipate (2-oxohexanedioate), 2-oxoglutarate, adipate (hexanedioate), glutarate, and to a lesser extent, pimelate (heptanedioate), 2-oxopimelate (2-oxoheptanedioate), 2-aminoadipate (2-aminohexanedioate), oxaloacetate, and citrate. Plays a central role in catabolism of lysine, hydroxylysine, and tryptophan, by transporting common metabolite intermediates (such as 2-oxoadipate) into the mitochondria, where it is converted into acetyl-CoA and can enter the citric acid (TCA) cycle. The chain is Mitochondrial 2-oxodicarboxylate carrier (SLC25A21) from Pongo abelii (Sumatran orangutan).